A 279-amino-acid chain; its full sequence is Uroplakin-3b (279 aa).

Positions 1–26 (MGLPSRQPRLWLLLLVVLGWPQPCLT) are cleaved as a signal peptide. Over 27–200 (LDLIPYTPRI…DTWPGRRSGD (174 aa)) the chain is Lumenal. N77 is a glycosylation site (N-linked (GlcNAc...) asparagine). Residues 201-221 (MIIITSILSSLAGLLLLAFLA) traverse the membrane as a helical segment. Topologically, residues 222 to 279 (ASSVRFSSLWWPEEAPEQLRIGSFMGKRYMTHHIPPSEAATLPVGCEPGLERFPSLSP) are cytoplasmic.

Belongs to the uroplakin-3 family. In terms of assembly, heterodimer with uroplakin-1B (UPK1B). Expression is urothelium-specific.

Its subcellular location is the cell membrane. In terms of biological role, component of the asymmetric unit membrane (AUM); a highly specialized biomembrane elaborated by terminally differentiated urothelial cells. May play an important role in AUM-cytoskeleton interaction in terminally differentiated urothelial cells. It also contributes to the formation of urothelial glycocalyx which may play an important role in preventing bacterial adherence. The chain is Uroplakin-3b (UPK3B) from Bos taurus (Bovine).